The primary structure comprises 123 residues: Large ribosomal subunit protein bL12 (123 aa).

It belongs to the bacterial ribosomal protein bL12 family. As to quaternary structure, homodimer. Part of the ribosomal stalk of the 50S ribosomal subunit. Forms a multimeric L10(L12)X complex, where L10 forms an elongated spine to which 2 to 4 L12 dimers bind in a sequential fashion. Binds GTP-bound translation factors.

In terms of biological role, forms part of the ribosomal stalk which helps the ribosome interact with GTP-bound translation factors. Is thus essential for accurate translation. In Aliarcobacter butzleri (strain RM4018) (Arcobacter butzleri), this protein is Large ribosomal subunit protein bL12.